The chain runs to 455 residues: Ribulose bisphosphate carboxylase large chain (455 aa).

Lysine 5 carries the N6,N6,N6-trimethyllysine modification. 2 residues coordinate substrate: asparagine 114 and threonine 164. Lysine 166 acts as the Proton acceptor in catalysis. Lysine 168 serves as a coordination point for substrate. Mg(2+) contacts are provided by lysine 192, aspartate 194, and glutamate 195. Lysine 192 carries the post-translational modification N6-carboxylysine. Catalysis depends on histidine 285, which acts as the Proton acceptor. Residues arginine 286, histidine 318, and serine 370 each coordinate substrate.

The protein belongs to the RuBisCO large chain family. Type I subfamily. Heterohexadecamer of 8 large chains and 8 small chains; disulfide-linked. The disulfide link is formed within the large subunit homodimers. It depends on Mg(2+) as a cofactor. The disulfide bond which can form in the large chain dimeric partners within the hexadecamer appears to be associated with oxidative stress and protein turnover.

The protein resides in the plastid. It is found in the chloroplast. It carries out the reaction 2 (2R)-3-phosphoglycerate + 2 H(+) = D-ribulose 1,5-bisphosphate + CO2 + H2O. The catalysed reaction is D-ribulose 1,5-bisphosphate + O2 = 2-phosphoglycolate + (2R)-3-phosphoglycerate + 2 H(+). In terms of biological role, ruBisCO catalyzes two reactions: the carboxylation of D-ribulose 1,5-bisphosphate, the primary event in carbon dioxide fixation, as well as the oxidative fragmentation of the pentose substrate in the photorespiration process. Both reactions occur simultaneously and in competition at the same active site. This Lupinus latifolius (Broad-leaved lupine) protein is Ribulose bisphosphate carboxylase large chain.